A 157-amino-acid polypeptide reads, in one-letter code: Protein Smg homolog (157 aa).

The protein belongs to the Smg family.

The polypeptide is Protein Smg homolog (Xanthomonas campestris pv. campestris (strain 8004)).